A 373-amino-acid polypeptide reads, in one-letter code: 3-isopropylmalate dehydrogenase gloI (373 aa).

Substrate-binding residues include Ser-92, Arg-98, and Arg-108. Mg(2+) is bound by residues Asp-228, Asp-253, and Asp-257. NADP(+) is bound by residues 294 to 300 and Asn-307; that span reads HGSAPDI.

Belongs to the isocitrate and isopropylmalate dehydrogenases family. As to quaternary structure, homodimer. It depends on Mg(2+) as a cofactor. Mn(2+) serves as cofactor.

It carries out the reaction (2R,3S)-3-isopropylmalate + NAD(+) = 4-methyl-2-oxopentanoate + CO2 + NADH. It functions in the pathway mycotoxin biosynthesis. In terms of biological role, 3-isopropylmalate dehydrogenase; part of the gene cluster that mediates the biosynthesis of pneumocandins, lipohexapeptides of the echinocandin family that prevent fungal cell wall formation by non-competitive inhibition of beta-1,3-glucan synthase. The 10,12-dimethylmyristoyl side chain is synthesized by the reducing polyketide synthase gloL/GLPKS4. The thioesterase gloN/GLHYD exclusively interacts with gloL/GLPKS4 to maintain turnover of the polyketide side chain. The 10R,12S-dimethylmyristic acid is then transferred to the first thiolation domain of the nonribosomal peptide synthetase gloA/GLNRPS4 by the acyl-AMP ligase gloD/GLligase, followed by its acylation to L-ornithine to trigger elongation of the cyclic hexapeptide. L-ornithine, 4R-hydroxyl-L-proline (generated from L-proline by the dioxygenase gloF/GLOXY2), 3S-hydroxyl-L-homotyrosine (generated by gloG/GLHtyB, gloH/GLHtyA, gloI/GLHtyC, gloJ/GLHtyD and hydroxylated at C-3 by the dioxygenase gloM/GLOXY1), 3R-hydroxyl-L-glutamine (generated from L-glutamine probably by the dioxygenase gloE/GLOXY3) and 3S-hydroxyl-L-proline (generated from L-proline by the dioxygenase gloF/GLOXY2 to yield pneumocandin B0), or 3S-hydroxyl-4S-methyl-L-proline (generated from L-leucine by the dioxygenase gloC/GLOXY4 to yield pneumocandin A0) are sequentially added to the growing chain. The last C domain of gloA/GLNRPS4 is proposed to be responsible for cyclization by condensation to form the peptide bond between L-ornithine and 3S-hydroxyl-4S-methyl-L-proline (for pneumocandin A0) or 3S-hydroxyl-L-proline (for pneumocandin B0). Finally, the subsequent C-4 hydroxylation of 3S-hydroxyl-L-homotyrosine and L-ornithine dihydroxylation at C-4 and C-5 are performed by the cytochrome P450 monooxygenases gloP/GLP450-1 and gloO/GLP450-2, respectively. This chain is 3-isopropylmalate dehydrogenase gloI, found in Glarea lozoyensis (strain ATCC 20868 / MF5171).